The primary structure comprises 475 residues: Ribulose bisphosphate carboxylase large chain (475 aa).

A propeptide spanning residues Met1–Ser2 is cleaved from the precursor. Residue Pro3 is modified to N-acetylproline. Lys14 carries the N6,N6,N6-trimethyllysine modification. Substrate is bound by residues Asn123 and Thr173. Catalysis depends on Lys175, which acts as the Proton acceptor. Position 177 (Lys177) interacts with substrate. Residues Lys201, Asp203, and Glu204 each coordinate Mg(2+). N6-carboxylysine is present on Lys201. His294 serves as the catalytic Proton acceptor. Arg295, His327, and Ser379 together coordinate substrate.

This sequence belongs to the RuBisCO large chain family. Type I subfamily. In terms of assembly, heterohexadecamer of 8 large chains and 8 small chains; disulfide-linked. The disulfide link is formed within the large subunit homodimers. The cofactor is Mg(2+). The disulfide bond which can form in the large chain dimeric partners within the hexadecamer appears to be associated with oxidative stress and protein turnover.

The protein resides in the plastid. Its subcellular location is the chloroplast. It carries out the reaction 2 (2R)-3-phosphoglycerate + 2 H(+) = D-ribulose 1,5-bisphosphate + CO2 + H2O. The enzyme catalyses D-ribulose 1,5-bisphosphate + O2 = 2-phosphoglycolate + (2R)-3-phosphoglycerate + 2 H(+). Its function is as follows. RuBisCO catalyzes two reactions: the carboxylation of D-ribulose 1,5-bisphosphate, the primary event in carbon dioxide fixation, as well as the oxidative fragmentation of the pentose substrate in the photorespiration process. Both reactions occur simultaneously and in competition at the same active site. The sequence is that of Ribulose bisphosphate carboxylase large chain from Chloranthus spicatus (Chulantree).